Reading from the N-terminus, the 98-residue chain is NADH-ubiquinone oxidoreductase chain 4L (98 aa).

The next 3 helical transmembrane spans lie at 1–21 (MTLI…GLLM), 29–49 (ALLC…LTIL), and 61–81 (IILL…LVMV).

Belongs to the complex I subunit 4L family. In terms of assembly, core subunit of respiratory chain NADH dehydrogenase (Complex I) which is composed of 45 different subunits.

It is found in the mitochondrion inner membrane. The enzyme catalyses a ubiquinone + NADH + 5 H(+)(in) = a ubiquinol + NAD(+) + 4 H(+)(out). In terms of biological role, core subunit of the mitochondrial membrane respiratory chain NADH dehydrogenase (Complex I) which catalyzes electron transfer from NADH through the respiratory chain, using ubiquinone as an electron acceptor. Part of the enzyme membrane arm which is embedded in the lipid bilayer and involved in proton translocation. The protein is NADH-ubiquinone oxidoreductase chain 4L (MT-ND4L) of Balaenoptera omurai (Omura's baleen whale).